The chain runs to 199 residues: GTP cyclohydrolase-2 (199 aa).

Residue 50–54 coordinates GTP; it reads RIHSE. Cys55, Cys66, and Cys68 together coordinate Zn(2+). GTP-binding positions include Gln71, 93–95, and Thr115; that span reads EGR. Catalysis depends on Asp127, which acts as the Proton acceptor. Arg129 functions as the Nucleophile in the catalytic mechanism. Residues Thr150 and Lys155 each coordinate GTP.

The protein belongs to the GTP cyclohydrolase II family. As to quaternary structure, homodimer. Requires Zn(2+) as cofactor.

It carries out the reaction GTP + 4 H2O = 2,5-diamino-6-hydroxy-4-(5-phosphoribosylamino)-pyrimidine + formate + 2 phosphate + 3 H(+). Its pathway is cofactor biosynthesis; riboflavin biosynthesis; 5-amino-6-(D-ribitylamino)uracil from GTP: step 1/4. In terms of biological role, catalyzes the conversion of GTP to 2,5-diamino-6-ribosylamino-4(3H)-pyrimidinone 5'-phosphate (DARP), formate and pyrophosphate. The sequence is that of GTP cyclohydrolase-2 from Buchnera aphidicola subsp. Baizongia pistaciae (strain Bp).